Reading from the N-terminus, the 466-residue chain is Purple acid phosphatase 6 (466 aa).

Positions 1 to 20 (MKNLVIFAFLFLSITTVING) are cleaved as a signal peptide. N-linked (GlcNAc...) asparagine glycosylation is present at Asn-88. Asp-164 is a binding site for Fe cation. Asn-172 carries N-linked (GlcNAc...) asparagine glycosylation. Asp-192 and Tyr-195 together coordinate Fe cation. Asp-192 is a Zn(2+) binding site. Asn-229 and His-314 together coordinate Zn(2+). Asn-229 is a binding site for substrate. The active-site Proton donor is the His-324. His-351 serves as a coordination point for Zn(2+). 351 to 353 (HVH) lines the substrate pocket. Residue His-353 coordinates Fe cation. Residues Asn-367 and Asn-424 are each glycosylated (N-linked (GlcNAc...) asparagine).

It belongs to the metallophosphoesterase superfamily. Purple acid phosphatase family. Homodimer. Fe cation is required as a cofactor. Zn(2+) serves as cofactor. In terms of tissue distribution, specifically expressed in flowers.

Its subcellular location is the secreted. The catalysed reaction is a phosphate monoester + H2O = an alcohol + phosphate. This is Purple acid phosphatase 6 (PAP6) from Arabidopsis thaliana (Mouse-ear cress).